Consider the following 345-residue polypeptide: Endochitinase 4 (345 aa).

A signal peptide spans 1–27; sequence MAPLLNTGLVILPLIVSTLLGPMPAFA. N-linked (GlcNAc...) asparagine glycosylation is found at Asn-29 and Asn-89. One can recognise a GH18 domain in the interval 41-345; the sequence is KVLQGYWENW…TFGDNVKGRL (305 aa). Residue Glu-163 is the Proton donor of the active site. N-linked (GlcNAc...) asparagine glycosylation occurs at Asn-316.

The protein belongs to the glycosyl hydrolase 18 family. Chitinase class V subfamily.

The protein resides in the secreted. The enzyme catalyses Random endo-hydrolysis of N-acetyl-beta-D-glucosaminide (1-&gt;4)-beta-linkages in chitin and chitodextrins.. Its function is as follows. Secreted chitinase involved in the degradation of chitin, a component of the cell walls of fungi and exoskeletal elements of some animals (including worms and arthropods). Participates in the infection process and directly acts in the penetration process of the host cuticle. The sequence is that of Endochitinase 4 (chi4) from Metarhizium robertsii (strain ARSEF 23 / ATCC MYA-3075) (Metarhizium anisopliae (strain ARSEF 23)).